The chain runs to 183 residues: Dual-action ribosomal maturation protein DarP (183 aa).

The protein belongs to the DarP family.

It is found in the cytoplasm. Member of a network of 50S ribosomal subunit biogenesis factors which assembles along the 30S-50S interface, preventing incorrect 23S rRNA structures from forming. Promotes peptidyl transferase center (PTC) maturation. The polypeptide is Dual-action ribosomal maturation protein DarP (Salmonella enteritidis PT4 (strain P125109)).